The primary structure comprises 505 residues: ATP synthase subunit alpha (505 aa).

Residue 170–177 (GDRQTGKT) coordinates ATP.

Belongs to the ATPase alpha/beta chains family. F-type ATPases have 2 components, CF(1) - the catalytic core - and CF(0) - the membrane proton channel. CF(1) has five subunits: alpha(3), beta(3), gamma(1), delta(1), epsilon(1). CF(0) has four main subunits: a(1), b(1), b'(1) and c(9-12).

Its subcellular location is the cellular thylakoid membrane. It carries out the reaction ATP + H2O + 4 H(+)(in) = ADP + phosphate + 5 H(+)(out). In terms of biological role, produces ATP from ADP in the presence of a proton gradient across the membrane. The alpha chain is a regulatory subunit. In Prochlorococcus marinus (strain MIT 9313), this protein is ATP synthase subunit alpha.